A 180-amino-acid polypeptide reads, in one-letter code: ATP synthase subunit delta (180 aa).

This sequence belongs to the ATPase delta chain family. As to quaternary structure, F-type ATPases have 2 components, F(1) - the catalytic core - and F(0) - the membrane proton channel. F(1) has five subunits: alpha(3), beta(3), gamma(1), delta(1), epsilon(1). F(0) has three main subunits: a(1), b(2) and c(10-14). The alpha and beta chains form an alternating ring which encloses part of the gamma chain. F(1) is attached to F(0) by a central stalk formed by the gamma and epsilon chains, while a peripheral stalk is formed by the delta and b chains.

Its subcellular location is the cell inner membrane. Functionally, f(1)F(0) ATP synthase produces ATP from ADP in the presence of a proton or sodium gradient. F-type ATPases consist of two structural domains, F(1) containing the extramembraneous catalytic core and F(0) containing the membrane proton channel, linked together by a central stalk and a peripheral stalk. During catalysis, ATP synthesis in the catalytic domain of F(1) is coupled via a rotary mechanism of the central stalk subunits to proton translocation. In terms of biological role, this protein is part of the stalk that links CF(0) to CF(1). It either transmits conformational changes from CF(0) to CF(1) or is implicated in proton conduction. The polypeptide is ATP synthase subunit delta (Chlorobium phaeobacteroides (strain BS1)).